An 87-amino-acid chain; its full sequence is Beta-toxin CsE3 (87 aa).

The first 19 residues, 1 to 19 (MNSLLIIAACLALIGTVWA), serve as a signal peptide directing secretion. The region spanning 20-85 (KEGYIVNYHT…VWPLPKKKCN (66 aa)) is the LCN-type CS-alpha/beta domain. 4 disulfides stabilise this stretch: Cys-31/Cys-84, Cys-35/Cys-60, Cys-44/Cys-65, and Cys-48/Cys-67. Asn-85 is subject to Asparagine amide.

This sequence belongs to the long (4 C-C) scorpion toxin superfamily. Sodium channel inhibitor family. Beta subfamily. As to expression, expressed by the venom gland.

It localises to the secreted. Functionally, beta toxins bind voltage-independently at site-4 of sodium channels (Nav) and shift the voltage of activation toward more negative potentials thereby affecting sodium channel activation and promoting spontaneous and repetitive firing. The sequence is that of Beta-toxin CsE3 from Centruroides sculpturatus (Arizona bark scorpion).